Here is a 525-residue protein sequence, read N- to C-terminus: NGFI-A-binding protein 2 (525 aa).

Residues 1-31 are disordered; that stretch reads MHRAPSPTAEQPPGRGDNTRRTPQPRFKASA. At serine 6 the chain carries Phosphoserine. The NCD1 stretch occupies residues 35 to 113; sequence ALPRTLGELQ…REWATNPGLF (79 aa). The tract at residues 135 to 238 is disordered; the sequence is GTRKGSMSNG…GAGGGPDRLE (104 aa). 4 positions are modified to phosphoserine: serine 157, serine 159, serine 162, and serine 171. A compositionally biased stretch (gly residues) spans 212–234; the sequence is AGGGVSEGPGVGGVAAGGAGGGP. Positions 267–356 are NCD2; it reads LLKLNKKLAR…SRQVARESTY (90 aa). Residues 353 to 384 are necessary for nuclear localization; it reads ESTYLSSLKGSRLHSEELGGPPLKKLKQEVGE. Lysine 379 is covalently cross-linked (Glycyl lysine isopeptide (Lys-Gly) (interchain with G-Cter in SUMO1)). The interval 381–416 is disordered; sequence EVGEQSHNEIQQPPPGPESYAPPYRPSLEEDSASLS. At serine 479 the chain carries Phosphoserine. The segment at 501 to 525 is disordered; that stretch reads APGPHPALVEGRRSSVKVEAEASRQ. Over residues 510–525 the composition is skewed to basic and acidic residues; the sequence is EGRRSSVKVEAEASRQ. Lysine 517 is covalently cross-linked (Glycyl lysine isopeptide (Lys-Gly) (interchain with G-Cter in SUMO1); alternate). A Glycyl lysine isopeptide (Lys-Gly) (interchain with G-Cter in SUMO2); alternate cross-link involves residue lysine 517.

The protein belongs to the NAB family. In terms of assembly, homomultimers may associate with EGR1 bound to DNA. In terms of processing, sumoylation by EGR2 represses EGR2 transcriptional activity in hindbrain. As to expression, highly expressed in brain and thymus, and at lower levels in spleen, kidney, heart and testis. Isoform 1 is predominantly expressed in testis, whereas isoform 3 is more abundant in thymus.

The protein resides in the nucleus. Acts as a transcriptional repressor for zinc finger transcription factors EGR1 and EGR2. Isoform 2 lacks repression ability. This is NGFI-A-binding protein 2 (Nab2) from Mus musculus (Mouse).